A 101-amino-acid polypeptide reads, in one-letter code: Secreted enzymes activator (101 aa).

Residues 1–10 (MSRRRRRASA) are compositionally biased toward basic residues. 2 disordered regions span residues 1-26 (MSRRRRRASATRRSAAVSPPHTPYGS) and 45-101 (TRLA…NGRG). Positions 45–60 (TRLAASSRASRAAVGS) are enriched in low complexity. The H-T-H motif DNA-binding region spans 55 to 74 (RAAVGSFDGAKNRPASSRRQ).

In terms of biological role, increases the production of several extracellular enzymes, like alkaline phosphatase, amylase, protease or lipase. When present in high concentrations, delays the production of pigments and sporulation. The sequence is that of Secreted enzymes activator (saf) from Streptomyces griseus.